Consider the following 55-residue polypeptide: Large ribosomal subunit protein bL33 (55 aa).

The protein belongs to the bacterial ribosomal protein bL33 family.

This Azoarcus sp. (strain BH72) protein is Large ribosomal subunit protein bL33.